We begin with the raw amino-acid sequence, 286 residues long: MYLQDVIMKLNDFWASKGCLLEQPYDMEVGAGTFHPATFFGSLRKGPWKVAYVQPSRRPTDGRYGENPNRLQRYFQYQVIIKPSPENSQELYLESLEYLGINLKEHDIRFVEDNWESPTLGAWGVGWEVWLDGMEITQFTYFQQIGGISLKDIPLEITYGLERIAMYLQGVDNVYEVQWNENVKYGDVFLENEREFSVFNFEEANVGLLFRHFDEYEKEFYRLVEKNLYLPAYDYILKCSHTFNLLDARGAISVSQRQTYVKRIQAMARKVARVFLEVQANENSPA.

Belongs to the class-II aminoacyl-tRNA synthetase family. As to quaternary structure, tetramer of two alpha and two beta subunits.

The protein resides in the cytoplasm. The enzyme catalyses tRNA(Gly) + glycine + ATP = glycyl-tRNA(Gly) + AMP + diphosphate. The chain is Glycine--tRNA ligase alpha subunit from Thermotoga sp. (strain RQ2).